The primary structure comprises 1262 residues: Clustered mitochondria protein homolog (1262 aa).

The interval Met-1–Thr-47 is disordered. Positions Ser-31–Asp-40 are enriched in polar residues. Residues Ala-335–Leu-580 enclose the Clu domain.

Belongs to the CLU family.

Its subcellular location is the cytoplasm. Functionally, mRNA-binding protein involved in proper cytoplasmic distribution of mitochondria. This chain is Clustered mitochondria protein homolog, found in Caenorhabditis briggsae.